Consider the following 64-residue polypeptide: uncharacterized protein (64 aa).

A compositionally biased stretch (polar residues) spans 1–14; it reads MFNFDPTDQPTDQH. The tract at residues 1–42 is disordered; it reads MFNFDPTDQPTDQHLLQLPTDPHPLQQPIDPHPPPQPNNNLP.

This is an uncharacterized protein from Dictyostelium discoideum (Social amoeba).